A 265-amino-acid chain; its full sequence is Phosphatidylglycerol--prolipoprotein diacylglyceryl transferase (265 aa).

7 helical membrane passes run 17–37 (VAVRWYGLMYLLAFVLFVVLG), 57–77 (LLLYGVLGVIIGGRLGEVLFY), 89–109 (ILAVWKGGMSFHGGFLGVLVA), 127–147 (FIAPLVPTGLAAGRIGNFING), 176–196 (QLYQAAGEGLLLFAIVWVFAA), 201–218 (LRAVSAVFLIGYGSLRFV), and 233–253 (LVPGLSTAQWLCVPMVVVGLA). Arg140 is an a 1,2-diacyl-sn-glycero-3-phospho-(1'-sn-glycerol) binding site.

The protein belongs to the Lgt family.

It localises to the cell inner membrane. The enzyme catalyses L-cysteinyl-[prolipoprotein] + a 1,2-diacyl-sn-glycero-3-phospho-(1'-sn-glycerol) = an S-1,2-diacyl-sn-glyceryl-L-cysteinyl-[prolipoprotein] + sn-glycerol 1-phosphate + H(+). The protein operates within protein modification; lipoprotein biosynthesis (diacylglyceryl transfer). Its function is as follows. Catalyzes the transfer of the diacylglyceryl group from phosphatidylglycerol to the sulfhydryl group of the N-terminal cysteine of a prolipoprotein, the first step in the formation of mature lipoproteins. The protein is Phosphatidylglycerol--prolipoprotein diacylglyceryl transferase of Azoarcus sp. (strain BH72).